Here is a 680-residue protein sequence, read N- to C-terminus: Pescadillo homolog (680 aa).

The interval 312–351 (APEKEAEETSKTSPDGEEEEQATETIDKFEPAAPGGDILM) is disordered. Residues 359-476 (DPSTLFSKFT…ELKRPDLYAP (118 aa)) enclose the BRCT domain. Disordered regions lie at residues 494–642 (QYDP…SRKK) and 654–680 (KKKD…APRE). Acidic residues-rich tracts occupy residues 505–527 (ERED…SDDE), 540–559 (DVDE…ESDE), and 573–582 (EAEESEDEGE). 3 stretches are compositionally biased toward basic and acidic residues: residues 602 to 626 (QEKE…KAKE), 654 to 664 (KKKDAEAEALR), and 671 to 680 (EKSGKAAPRE). Positions 611-673 (KAKTDAKKKA…RAKRRKIEKS (63 aa)) form a coiled coil.

The protein belongs to the pescadillo family. Component of the NOP7 complex, composed of erb1, nop7 and ytm1. The complex is held together by erb1, which interacts with nop7 via its N-terminal domain and with ytm1 via a high-affinity interaction between the seven-bladed beta-propeller domains of the 2 proteins. The NOP7 complex associates with the 66S pre-ribosome.

The protein resides in the nucleus. Its subcellular location is the nucleolus. It localises to the nucleoplasm. Component of the NOP7 complex, which is required for maturation of the 25S and 5.8S ribosomal RNAs and formation of the 60S ribosome. The protein is Pescadillo homolog (nop7) of Sclerotinia sclerotiorum (strain ATCC 18683 / 1980 / Ss-1) (White mold).